A 30-amino-acid chain; its full sequence is Agglutinin alpha-1 chain (30 aa).

In terms of domain architecture, Jacalin-type lectin spans 1–30 (GVAFDDGSYTGIREINFEYNRETAIGGXQV).

It belongs to the jacalin lectin family. In terms of assembly, tetramer of four alpha chains associated with two or four beta chains.

Its function is as follows. N-acetyl-galactosamine and D-galactose specific lectin. Binds the Tn-antigen structure GalNAc-alpha-1-O-Ser, the T-antigen structure Gal-beta1-3-GalNAc and IgA. This is Agglutinin alpha-1 chain from Morus nigra (Black mulberry).